The primary structure comprises 256 residues: LexA repressor (256 aa).

The disordered stretch occupies residues 1–31 (MTSQGRGTRRGGTRGNVRAFPEGPTDAGLTP). Positions 53 to 73 (VREIGEAVGLTSTSSVAHQLK) form a DNA-binding region, H-T-H motif. Residues S180 and K217 each act as for autocatalytic cleavage activity in the active site.

The protein belongs to the peptidase S24 family. In terms of assembly, homodimer.

It catalyses the reaction Hydrolysis of Ala-|-Gly bond in repressor LexA.. Represses a number of genes involved in the response to DNA damage (SOS response), including recA and lexA. In the presence of single-stranded DNA, RecA interacts with LexA causing an autocatalytic cleavage which disrupts the DNA-binding part of LexA, leading to derepression of the SOS regulon and eventually DNA repair. The protein is LexA repressor of Frankia casuarinae (strain DSM 45818 / CECT 9043 / HFP020203 / CcI3).